Here is a 1539-residue protein sequence, read N- to C-terminus: Lysine-specific demethylase 5D (1539 aa).

Residues 14-55 enclose the JmjN domain; sequence CPVFEPSWAEFQDPLGYIAKIRPIAEKSGICKIRPPADWQPP. The ARID domain occupies 79–169; sequence TRVKLNYLDQ…IIYPYEMFQS (91 aa). Positions 192 to 228 are disordered; sequence PHSIPLRQSVQPSKFSSYSRRAKRLQPDPEPTEEDIE. Polar residues predominate over residues 197 to 210; sequence LRQSVQPSKFSSYS. Glycyl lysine isopeptide (Lys-Gly) (interchain with G-Cter in SUMO2) cross-links involve residues Lys-205, Lys-229, Lys-244, and Lys-272. A phosphoserine mark is found at Ser-291 and Ser-307. A PHD-type 1 zinc finger spans residues 316–362; sequence ICQVCSRGDEDDKLLFCDGCDDNYHIFCLLPPLPEIPRGIWRCPKCI. 2-oxoglutarate is bound at residue Tyr-430. The 167-residue stretch at 458-624 folds into the JmjC domain; that stretch reads EYATSGWNLN…AGRQCIEHYR (167 aa). The Fe cation site is built by His-504 and Glu-506. Residues Ser-512, Asn-514, and Lys-522 each contribute to the 2-oxoglutarate site. Residue His-592 participates in Fe cation binding. The segment at 697–749 adopts a C5HC2 zinc-finger fold; that stretch reads CIKCKTTCFLSALACYDCPDGLVCLSHINDLCKCSSSRQYLRYRYTLDELPTM. The residue at position 884 (Ser-884) is a Phosphoserine. Residues 1174–1235 form a PHD-type 2 zinc finger; the sequence is ICVCGQVPAG…DTKFLCPLCM (62 aa). Ser-1346 is subject to Phosphoserine. The interval 1429–1521 is disordered; that stretch reads HQGSRTRSRA…QHKDSGSSAA (93 aa). Basic residues predominate over residues 1432–1446; sequence SRTRSRALERRRRRQ. The segment covering 1477 to 1491 has biased composition (basic and acidic residues); sequence GREEEHYQEKADREN. The span at 1494–1521 shows a compositional bias: polar residues; sequence LTPSTDHSPFLKGNQNSLQHKDSGSSAA.

This sequence belongs to the JARID1 histone demethylase family. Interacts with PCGF6, MSH5, ZMYND8, AR. It depends on L-ascorbate as a cofactor. Fe(2+) is required as a cofactor. In terms of tissue distribution, expression is highly down-regulated in metastatic prostate tumors.

Its subcellular location is the nucleus. The enzyme catalyses N(6),N(6),N(6)-trimethyl-L-lysyl(4)-[histone H3] + 3 2-oxoglutarate + 3 O2 = L-lysyl(4)-[histone H3] + 3 formaldehyde + 3 succinate + 3 CO2. Histone demethylase that specifically demethylates 'Lys-4' of histone H3, thereby playing a central role in histone code. Does not demethylate histone H3 'Lys-9', H3 'Lys-27', H3 'Lys-36', H3 'Lys-79' or H4 'Lys-20'. Demethylates trimethylated and dimethylated but not monomethylated H3 'Lys-4'. May play a role in spermatogenesis. Involved in transcriptional repression of diverse metastasis-associated genes; in this function seems to cooperate with ZMYND8. Suppresses prostate cancer cell invasion. Regulates androgen receptor (AR) transcriptional activity by demethylating H3K4me3 active transcription marks. The polypeptide is Lysine-specific demethylase 5D (KDM5D) (Homo sapiens (Human)).